We begin with the raw amino-acid sequence, 162 residues long: uncharacterized protein (162 aa).

3 helical membrane passes run 28–50, 57–76, and 108–130; these read ALALALLPRSSLLWYLLFAVCFF, LLLLSLVLFGFVVPSFDPWL, and YNTMIAGGLVAGALCYLPCYALA.

It is found in the cell membrane. This is an uncharacterized protein from Treponema pallidum (strain Nichols).